The chain runs to 375 residues: Glutamate 5-kinase (375 aa).

Lysine 17 contributes to the ATP binding site. 3 residues coordinate substrate: serine 57, aspartate 144, and asparagine 156. Residue 176–177 (TD) coordinates ATP. One can recognise a PUA domain in the interval 283 to 361 (KGRLWLDTGA…HQIEQILGYV (79 aa)).

The protein belongs to the glutamate 5-kinase family.

Its subcellular location is the cytoplasm. It carries out the reaction L-glutamate + ATP = L-glutamyl 5-phosphate + ADP. The protein operates within amino-acid biosynthesis; L-proline biosynthesis; L-glutamate 5-semialdehyde from L-glutamate: step 1/2. Functionally, catalyzes the transfer of a phosphate group to glutamate to form L-glutamate 5-phosphate. The chain is Glutamate 5-kinase from Nitrosococcus oceani (strain ATCC 19707 / BCRC 17464 / JCM 30415 / NCIMB 11848 / C-107).